The following is a 228-amino-acid chain: Dolichyl-phosphate hexose transferase HVO_1613 (228 aa).

The protein belongs to the glycosyltransferase 2 family.

Glycosyltransferase that adds a monosaccharide to dolichol phosphate, thereby being responsible for generating one of the three monosaccharide-modified dolichol phosphates. The subunit onto which additional sugars are added is not known. The sequence is that of Dolichyl-phosphate hexose transferase HVO_1613 from Haloferax volcanii (strain ATCC 29605 / DSM 3757 / JCM 8879 / NBRC 14742 / NCIMB 2012 / VKM B-1768 / DS2) (Halobacterium volcanii).